The sequence spans 458 residues: Glycine--tRNA ligase (458 aa).

Substrate-binding residues include Arg97 and Glu171. Residues Arg203–Glu205, Phe213–Phe218, Glu287–Leu288, and Gly331–Arg334 each bind ATP. Phe218–Glu222 is a substrate binding site. Residue Glu327–Gly331 coordinates substrate.

This sequence belongs to the class-II aminoacyl-tRNA synthetase family. In terms of assembly, homodimer.

Its subcellular location is the cytoplasm. It carries out the reaction tRNA(Gly) + glycine + ATP = glycyl-tRNA(Gly) + AMP + diphosphate. Its function is as follows. Catalyzes the attachment of glycine to tRNA(Gly). The protein is Glycine--tRNA ligase of Bacillus anthracis.